The sequence spans 332 residues: dTDP-3,4-didehydro-2,6-dideoxy-alpha-D-glucose 3-reductase (332 aa).

12 to 18 (CASFAWR) serves as a coordination point for NADP(+). Substrate is bound at residue arginine 19. Residues 37-38 (SR), tyrosine 58, leucine 74, and histidine 79 contribute to the NADP(+) site. Lysine 97 serves as the catalytic Proton donor. Positions 165 and 177 each coordinate NADP(+). Positions 235 and 255 each coordinate substrate.

The protein belongs to the Gfo/Idh/MocA family. In terms of assembly, monomer.

The catalysed reaction is dTDP-4-dehydro-2,6-dideoxy-alpha-D-glucose + NADP(+) = dTDP-3,4-didehydro-2,6-dideoxy-alpha-D-glucose + NADPH + H(+). In terms of biological role, involved in the biosynthesis of forosamine ((4-dimethylamino)-2,3,4,6-tetradeoxy-alpha-D-threo-hexopyranose), a highly deoxygenated sugar component of several bioactive natural products such as the insecticidal spinosyns A and D. Catalyzes the reduction of the C-3 keto moiety of dTDP-3,4-diketo-2,6-dideoxy-alpha-D-glucose to yield dTDP-4-keto-2,6-dideoxy-alpha-D-glucose. NADPH is the better reductant, however NADH can also be used. The protein is dTDP-3,4-didehydro-2,6-dideoxy-alpha-D-glucose 3-reductase of Saccharopolyspora spinosa.